We begin with the raw amino-acid sequence, 31 residues long: Cytochrome b6-f complex subunit 8 (31 aa).

Residues 5–25 form a helical membrane-spanning segment; sequence IVSLAWAALMVVFTFSLSLVV.

It belongs to the PetN family. In terms of assembly, the 4 large subunits of the cytochrome b6-f complex are cytochrome b6, subunit IV (17 kDa polypeptide, PetD), cytochrome f and the Rieske protein, while the 4 small subunits are PetG, PetL, PetM and PetN. The complex functions as a dimer.

It is found in the plastid. The protein resides in the chloroplast thylakoid membrane. In terms of biological role, component of the cytochrome b6-f complex, which mediates electron transfer between photosystem II (PSII) and photosystem I (PSI), cyclic electron flow around PSI, and state transitions. In Acorus calamus (Sweet flag), this protein is Cytochrome b6-f complex subunit 8.